The chain runs to 161 residues: MORN repeat-containing protein 5 (161 aa).

MORN repeat units follow at residues 8–30 (YIGEYVDGRMEGKAKYILPTETI), 31–53 (YVGEMKDGMFHGEGTLYFPSGSQ), and 54–75 (YDAIWENGLAIKGTYTFSDGLH).

In terms of tissue distribution, expressed in sperm (at protein level).

It localises to the cell projection. The protein localises to the cilium. It is found in the flagellum. In Homo sapiens (Human), this protein is MORN repeat-containing protein 5 (MORN5).